Consider the following 491-residue polypeptide: Ketol-acid reductoisomerase (NADP(+)) (491 aa).

In terms of domain architecture, KARI N-terminal Rossmann spans L14–S208. Residues C45 to Q48, R68, and S78 each bind NADP(+). Residue H132 is part of the active site. Residue G158 participates in NADP(+) binding. KARI C-terminal knotted domains follow at residues S209–N344 and Y345–M485. Residues D217, E221, E389, and E393 each coordinate Mg(2+). S414 provides a ligand contact to substrate.

It belongs to the ketol-acid reductoisomerase family. Mg(2+) is required as a cofactor.

It catalyses the reaction (2R)-2,3-dihydroxy-3-methylbutanoate + NADP(+) = (2S)-2-acetolactate + NADPH + H(+). The enzyme catalyses (2R,3R)-2,3-dihydroxy-3-methylpentanoate + NADP(+) = (S)-2-ethyl-2-hydroxy-3-oxobutanoate + NADPH + H(+). The protein operates within amino-acid biosynthesis; L-isoleucine biosynthesis; L-isoleucine from 2-oxobutanoate: step 2/4. It functions in the pathway amino-acid biosynthesis; L-valine biosynthesis; L-valine from pyruvate: step 2/4. Functionally, involved in the biosynthesis of branched-chain amino acids (BCAA). Catalyzes an alkyl-migration followed by a ketol-acid reduction of (S)-2-acetolactate (S2AL) to yield (R)-2,3-dihydroxy-isovalerate. In the isomerase reaction, S2AL is rearranged via a Mg-dependent methyl migration to produce 3-hydroxy-3-methyl-2-ketobutyrate (HMKB). In the reductase reaction, this 2-ketoacid undergoes a metal-dependent reduction by NADPH to yield (R)-2,3-dihydroxy-isovalerate. In Blochmanniella pennsylvanica (strain BPEN), this protein is Ketol-acid reductoisomerase (NADP(+)).